Reading from the N-terminus, the 247-residue chain is Tyrosine recombinase XerD-like (247 aa).

In terms of domain architecture, Core-binding (CB) spans 1–72; that stretch reads MIKHIEAFLA…TVNQFLHYLY (72 aa). The region spanning 91–247 is the Tyr recombinase domain; it reads STKVPFTYQL…PITLEKYYRL (157 aa). Arg-212 is an active-site residue. Tyr-244 acts as the O-(3'-phospho-DNA)-tyrosine intermediate in catalysis.

The protein belongs to the 'phage' integrase family. XerD-like subfamily.

It localises to the cytoplasm. Its function is as follows. Putative tyrosine recombinase. Not involved in the cutting and rejoining of the recombining DNA molecules on dif(SL) site. The sequence is that of Tyrosine recombinase XerD-like from Streptococcus uberis (strain ATCC BAA-854 / 0140J).